The chain runs to 386 residues: GTPase Obg (386 aa).

An Obg domain is found at 1–159; that stretch reads MKFVDEASIL…RELLLELMLL (159 aa). The tract at residues 127 to 147 is disordered; sequence NTRFKSSVNRTPRQKTNGTPG. Residues 129 to 145 show a composition bias toward polar residues; sequence RFKSSVNRTPRQKTNGT. Positions 160–333 constitute an OBG-type G domain; it reads ADVGMLGMPN…LCWDVMTFII (174 aa). GTP is bound by residues 166 to 173, 191 to 195, 213 to 216, 283 to 286, and 314 to 316; these read GMPNAGKS, FTTLV, DIPG, NKID, and SAA. Residues Ser173 and Thr193 each contribute to the Mg(2+) site.

The protein belongs to the TRAFAC class OBG-HflX-like GTPase superfamily. OBG GTPase family. As to quaternary structure, monomer. Mg(2+) is required as a cofactor.

The protein localises to the cytoplasm. Functionally, an essential GTPase which binds GTP, GDP and possibly (p)ppGpp with moderate affinity, with high nucleotide exchange rates and a fairly low GTP hydrolysis rate. Plays a role in control of the cell cycle, stress response, ribosome biogenesis and in those bacteria that undergo differentiation, in morphogenesis control. The chain is GTPase Obg from Escherichia coli (strain UTI89 / UPEC).